Consider the following 136-residue polypeptide: Cytokine-like protein 1 (136 aa).

The N-terminal stretch at 1–22 (MRTPGPLPVLLLLLAGAPAARP) is a signal peptide.

As to expression, specifically expressed in CD34+ hematopoietic cells.

The protein localises to the secreted. This Homo sapiens (Human) protein is Cytokine-like protein 1 (CYTL1).